The primary structure comprises 262 residues: 14-3-3-like protein B (262 aa).

Belongs to the 14-3-3 family.

This chain is 14-3-3-like protein B, found in Hordeum vulgare (Barley).